We begin with the raw amino-acid sequence, 565 residues long: NAD-dependent malic enzyme (565 aa).

Tyr103 serves as the catalytic Proton donor. Lys177 functions as the Proton acceptor in the catalytic mechanism. Residues Glu248, Asp249, and Asp272 each contribute to the a divalent metal cation site. Asp272 and Asn419 together coordinate NAD(+). Ser445 is subject to Phosphoserine.

The protein belongs to the malic enzymes family. Mg(2+) is required as a cofactor. It depends on Mn(2+) as a cofactor.

The enzyme catalyses (S)-malate + NAD(+) = pyruvate + CO2 + NADH. It catalyses the reaction oxaloacetate + H(+) = pyruvate + CO2. In Schizosaccharomyces pombe (strain 972 / ATCC 24843) (Fission yeast), this protein is NAD-dependent malic enzyme (mae2).